We begin with the raw amino-acid sequence, 98 residues long: Integration host factor subunit alpha (98 aa).

It belongs to the bacterial histone-like protein family. In terms of assembly, heterodimer of an alpha and a beta chain.

Its function is as follows. This protein is one of the two subunits of integration host factor, a specific DNA-binding protein that functions in genetic recombination as well as in transcriptional and translational control. This chain is Integration host factor subunit alpha, found in Marinomonas sp. (strain MWYL1).